A 372-amino-acid chain; its full sequence is NAD(P)H-quinone oxidoreductase subunit 1 (372 aa).

The next 8 helical transmembrane spans lie at 29–49, 97–117, 130–150, 176–196, 204–224, 254–274, 308–328, and 347–367; these read WIPFPSFLMIIGATVGVLVVV, WLFTLGPVLVVLPVFVSYLIV, VGIFFWIALSSIAPIGLLMAG, LALSVLAIVMMSNSLSTIDIV, ILGWNIWRQPVGFFIFWIAAL, FALFYLGSYVNLVLSALVFAI, SLGITMTVLKAYFLVFIAVLM, and FLLPVSLVNLLLTAALKLAFP.

Belongs to the complex I subunit 1 family. NDH-1 is composed of at least 11 different subunits.

Its subcellular location is the cellular thylakoid membrane. The enzyme catalyses a plastoquinone + NADH + (n+1) H(+)(in) = a plastoquinol + NAD(+) + n H(+)(out). It carries out the reaction a plastoquinone + NADPH + (n+1) H(+)(in) = a plastoquinol + NADP(+) + n H(+)(out). In terms of biological role, NDH-1 shuttles electrons from an unknown electron donor, via FMN and iron-sulfur (Fe-S) centers, to quinones in the respiratory and/or the photosynthetic chain. The immediate electron acceptor for the enzyme in this species is believed to be plastoquinone. Couples the redox reaction to proton translocation, and thus conserves the redox energy in a proton gradient. The chain is NAD(P)H-quinone oxidoreductase subunit 1 from Crocosphaera subtropica (strain ATCC 51142 / BH68) (Cyanothece sp. (strain ATCC 51142)).